The chain runs to 208 residues: Sexual inducer glycoprotein (208 aa).

The signal sequence occupies residues methionine 1–alanine 11. Residues asparagine 89, asparagine 119, asparagine 131, asparagine 139, asparagine 146, and asparagine 188 are each glycosylated (N-linked (GlcNAc...) asparagine).

In terms of biological role, the sexual inducer is a glycoprotein synthesized and released by sexual males at about the time they release sperm packets. It is one of the most potent biological effector molecules known: it exhibits full effectiveness in converting asexually growing males and females to the sexual pathway at about 10(-7) m. This is Sexual inducer glycoprotein from Volvox carteri (Green alga).